The following is a 369-amino-acid chain: S-(hydroxymethyl)glutathione dehydrogenase (369 aa).

The Zn(2+) site is built by cysteine 40, histidine 62, cysteine 92, cysteine 95, cysteine 98, cysteine 106, and cysteine 169.

Belongs to the zinc-containing alcohol dehydrogenase family. Class-III subfamily. As to quaternary structure, homodimer. Zn(2+) serves as cofactor.

It is found in the cytoplasm. The catalysed reaction is S-(hydroxymethyl)glutathione + NADP(+) = S-formylglutathione + NADPH + H(+). The enzyme catalyses S-(hydroxymethyl)glutathione + NAD(+) = S-formylglutathione + NADH + H(+). It carries out the reaction a primary alcohol + NAD(+) = an aldehyde + NADH + H(+). It catalyses the reaction a secondary alcohol + NAD(+) = a ketone + NADH + H(+). The catalysed reaction is S-nitrosoglutathione + NADH + H(+) = S-(hydroxysulfenamide)glutathione + NAD(+). Functionally, has high formaldehyde dehydrogenase activity in the presence of glutathione and catalyzes the oxidation of normal alcohols in a reaction that is not GSH-dependent. In addition, hemithiolacetals other than those formed from GSH, including omega-thiol fatty acids, also are substrates. Also acts as a S-nitroso-glutathione reductase by catalyzing the NADH-dependent reduction of S-nitrosoglutathione. The protein is S-(hydroxymethyl)glutathione dehydrogenase (frmA) of Escherichia coli O6:H1 (strain CFT073 / ATCC 700928 / UPEC).